The sequence spans 1678 residues: Clathrin heavy chain (1678 aa).

WD40-like repeat regions lie at residues 24–67 (SFSF…RPIS), 68–107 (ADSAIMNPASKVIALKAQKTLQIFNIEMKSKMKAHTMNED), 108–149 (VVFW…SSLN), 150–195 (GCQI…QAIE), 196–257 (GHAA…PEAQ), 258–301 (NDFP…ISAD), and 302–330 (TIFVTAPHEASGGIIGVNRKGQVLSVTVD). CHCR repeat units lie at residues 538–684 (VAEE…QICV), 687–829 (ATKY…SEDI), 834–973 (ILVV…QLID), 980–1125 (LSET…VKEA), 1129–1270 (YIKA…FRLA), 1275–1421 (LHIV…LLLN), and 1424–1567 (LLVL…YDCF). Positions 1334-1643 (REHLELFWSR…IQMEPQLMIT (310 aa)) are involved in binding clathrin light chain. Positions 1552 to 1677 (EELLGWFLER…AGGRNMGYPY (126 aa)) are trimerization.

It belongs to the clathrin heavy chain family. Clathrin triskelions, composed of 3 heavy chains and 3 light chains, are the basic subunits of the clathrin coat. Interacts with sau.

The protein localises to the cytoplasmic vesicle membrane. The protein resides in the membrane. Its subcellular location is the coated pit. Clathrin is the major protein of the polyhedral coat of coated pits and vesicles. This chain is Clathrin heavy chain (Chc), found in Drosophila melanogaster (Fruit fly).